Consider the following 302-residue polypeptide: Putative RING-H2 finger protein ATL35 (302 aa).

The signal sequence occupies residues Met1 to Cys31. Residues Thr50–Leu70 form a helical membrane-spanning segment. The segment at Cys123–Arg165 adopts an RING-type; atypical zinc-finger fold. Ser226 bears the Phosphoserine mark.

The protein belongs to the RING-type zinc finger family. ATL subfamily.

It localises to the membrane. The catalysed reaction is S-ubiquitinyl-[E2 ubiquitin-conjugating enzyme]-L-cysteine + [acceptor protein]-L-lysine = [E2 ubiquitin-conjugating enzyme]-L-cysteine + N(6)-ubiquitinyl-[acceptor protein]-L-lysine.. The protein operates within protein modification; protein ubiquitination. This chain is Putative RING-H2 finger protein ATL35 (ATL35), found in Arabidopsis thaliana (Mouse-ear cress).